The chain runs to 55 residues: Large ribosomal subunit protein bL33 (55 aa).

It belongs to the bacterial ribosomal protein bL33 family.

This Cereibacter sphaeroides (strain ATCC 17029 / ATH 2.4.9) (Rhodobacter sphaeroides) protein is Large ribosomal subunit protein bL33.